The chain runs to 759 residues: Olfactomedin-like protein 2B (759 aa).

The N-terminal stretch at 1-20 (MAKSLLLVLCFALVTTLGWG) is a signal peptide. 2 coiled-coil regions span residues 40–68 (TEDE…KVKA) and 179–209 (KLEE…MNKR). Residues Asn-187 and Asn-213 are each glycosylated (N-linked (GlcNAc...) asparagine). Disordered regions lie at residues 346–396 (TRRP…VSAS) and 456–494 (THTA…EEED). A compositionally biased stretch (low complexity) spans 356–396 (AAVTADAGTTSAGTPTTALPSARLPASTAAPSTPDPAVSAS). The region spanning 502 to 759 (RCKDTLSTIT…QVTYHVIFAY (258 aa)) is the Olfactomedin-like domain. A disulfide bond links Cys-503 and Cys-689. Residue Asn-704 is glycosylated (N-linked (GlcNAc...) asparagine).

In terms of assembly, homodimer. Binds to heparin and chondroitin sulfate E. O-glycosylated and N-glycosylated.

It localises to the secreted. This is Olfactomedin-like protein 2B (OLFML2B) from Bos taurus (Bovine).